Here is a 404-residue protein sequence, read N- to C-terminus: Trigger factor (404 aa).

Residues 160-225 (KDHLFVRTEE…VLEVKTLKLP (66 aa)) enclose the PPIase FKBP-type domain.

The protein belongs to the FKBP-type PPIase family. Tig subfamily.

It is found in the cytoplasm. It catalyses the reaction [protein]-peptidylproline (omega=180) = [protein]-peptidylproline (omega=0). Functionally, involved in protein export. Acts as a chaperone by maintaining the newly synthesized protein in an open conformation. Functions as a peptidyl-prolyl cis-trans isomerase. The protein is Trigger factor of Thermus thermophilus (strain ATCC BAA-163 / DSM 7039 / HB27).